The following is a 309-amino-acid chain: Probable 3-hydroxyacyl-CoA dehydrogenase B0272.3 (309 aa).

The protein belongs to the 3-hydroxyacyl-CoA dehydrogenase family. As to quaternary structure, homodimer.

The protein resides in the mitochondrion matrix. It catalyses the reaction a (3S)-3-hydroxyacyl-CoA + NAD(+) = a 3-oxoacyl-CoA + NADH + H(+). It functions in the pathway lipid metabolism; fatty acid beta-oxidation. This Caenorhabditis elegans protein is Probable 3-hydroxyacyl-CoA dehydrogenase B0272.3.